Consider the following 201-residue polypeptide: Large ribosomal subunit protein uL4 (201 aa).

The segment at 44–71 (RAQKTRAEVSGSGKKPWRQKGTGRARSG) is disordered.

This sequence belongs to the universal ribosomal protein uL4 family. As to quaternary structure, part of the 50S ribosomal subunit.

One of the primary rRNA binding proteins, this protein initially binds near the 5'-end of the 23S rRNA. It is important during the early stages of 50S assembly. It makes multiple contacts with different domains of the 23S rRNA in the assembled 50S subunit and ribosome. In terms of biological role, forms part of the polypeptide exit tunnel. The polypeptide is Large ribosomal subunit protein uL4 (Actinobacillus succinogenes (strain ATCC 55618 / DSM 22257 / CCUG 43843 / 130Z)).